Consider the following 225-residue polypeptide: GTP cyclohydrolase 1 (225 aa).

Basic and acidic residues predominate over residues 1 to 12 (MERSKQSHDNQA). Positions 1-59 (MERSKQSHDNQADSRPTTNESSLNGHFDGLVKKTPGMWDVKGRGTAGESSSHTGSSVVE) are disordered. Composition is skewed to polar residues over residues 13–24 (DSRPTTNESSLN) and 47–58 (GESSSHTGSSVV). Zn(2+)-binding residues include Cys149, His152, and Cys220.

The protein belongs to the GTP cyclohydrolase I family. In terms of assembly, toroid-shaped homodecamer, composed of two pentamers of five dimers.

The protein resides in the cytoplasm. It is found in the nucleus. The catalysed reaction is GTP + H2O = 7,8-dihydroneopterin 3'-triphosphate + formate + H(+). It participates in cofactor biosynthesis; 7,8-dihydroneopterin triphosphate biosynthesis; 7,8-dihydroneopterin triphosphate from GTP: step 1/1. GTP shows a positive allosteric effect, and tetrahydrobiopterin inhibits the enzyme activity. Zinc is required for catalytic activity. Inhibited by Mg(2+). Functionally, may positively regulate nitric oxide synthesis in endothelial cells. May be involved in dopamine synthesis. May modify pain sensitivity and persistence. The protein is GTP cyclohydrolase 1 (gch1) of Oncorhynchus mykiss (Rainbow trout).